The primary structure comprises 213 residues: uncharacterized protein (213 aa).

This is an uncharacterized protein from Homo sapiens (Human).